Reading from the N-terminus, the 114-residue chain is Flagellar transcriptional regulator FlhD (114 aa).

The protein belongs to the FlhD family. As to quaternary structure, homodimer; disulfide-linked. Forms a heterohexamer composed of two FlhC and four FlhD subunits. Each FlhC binds a FlhD dimer, forming a heterotrimer, and a hexamer assembles by dimerization of two heterotrimers.

It is found in the cytoplasm. Its function is as follows. Functions in complex with FlhC as a master transcriptional regulator that regulates transcription of several flagellar and non-flagellar operons by binding to their promoter region. Activates expression of class 2 flagellar genes, including fliA, which is a flagellum-specific sigma factor that turns on the class 3 genes. Also regulates genes whose products function in a variety of physiological pathways. The polypeptide is Flagellar transcriptional regulator FlhD (Wigglesworthia glossinidia brevipalpis).